A 185-amino-acid chain; its full sequence is Translocon-associated protein subunit gamma (185 aa).

Methionine 1 is subject to N-acetylmethionine. Over 1–27 (MAPKGGPKQQSEEDLLLQDFSRNLSAK) the chain is Lumenal. Position 11 is a phosphoserine (serine 11). Residues 28-48 (SSALFFGNAFIVSAIPIWLYW) form a helical membrane-spanning segment. At 49–54 (RIWHMD) the chain is on the cytoplasmic side. A helical membrane pass occupies residues 55 to 76 (LIQSAVLYSVMTLVSTYLVAFA). Topologically, residues 77–135 (YKNVKFVLKHKVAQKREDAVSKEVTRKLSEADNRKMSRKEKDERILWKKNEVADYEATT) are lumenal. A Phosphoserine modification is found at serine 105. The helical transmembrane segment at 136 to 157 (FSIFYNNTLFLVLVIVASFFIL) threads the bilayer. The Cytoplasmic segment spans residues 158–163 (KNFNPT). The chain crosses the membrane as a helical span at residues 164–184 (VNYILSISASSGLIALLSTGS).

This sequence belongs to the TRAP-gamma family. In terms of assembly, heterotetramer of TRAP-alpha, TRAP-beta, TRAP-delta and TRAP-gamma.

It localises to the endoplasmic reticulum membrane. In terms of biological role, TRAP proteins are part of a complex whose function is to bind calcium to the ER membrane and thereby regulate the retention of ER resident proteins. This Bos taurus (Bovine) protein is Translocon-associated protein subunit gamma (SSR3).